The sequence spans 430 residues: Adenylosuccinate synthetase (430 aa).

Residues 12-18 (GDEGKGK) and 40-42 (GHT) each bind GTP. The Proton acceptor role is filled by D13. Positions 13 and 40 each coordinate Mg(2+). Residues 13–16 (DEGK), 38–41 (NAGH), T130, R144, Q224, T239, and R303 each bind IMP. The Proton donor role is filled by H41. 299-305 (TVTGRKR) is a substrate binding site. GTP-binding positions include R305, 331-333 (KLD), and 413-415 (STS).

It belongs to the adenylosuccinate synthetase family. As to quaternary structure, homodimer. Requires Mg(2+) as cofactor.

It localises to the cytoplasm. It catalyses the reaction IMP + L-aspartate + GTP = N(6)-(1,2-dicarboxyethyl)-AMP + GDP + phosphate + 2 H(+). Its pathway is purine metabolism; AMP biosynthesis via de novo pathway; AMP from IMP: step 1/2. Plays an important role in the de novo pathway of purine nucleotide biosynthesis. Catalyzes the first committed step in the biosynthesis of AMP from IMP. The chain is Adenylosuccinate synthetase from Methylorubrum extorquens (strain CM4 / NCIMB 13688) (Methylobacterium extorquens).